A 225-amino-acid polypeptide reads, in one-letter code: Enolase-phosphatase E1 (225 aa).

It belongs to the HAD-like hydrolase superfamily. MasA/MtnC family. Monomer. It depends on Mg(2+) as a cofactor.

The catalysed reaction is 5-methylsulfanyl-2,3-dioxopentyl phosphate + H2O = 1,2-dihydroxy-5-(methylsulfanyl)pent-1-en-3-one + phosphate. Its pathway is amino-acid biosynthesis; L-methionine biosynthesis via salvage pathway; L-methionine from S-methyl-5-thio-alpha-D-ribose 1-phosphate: step 3/6. It participates in amino-acid biosynthesis; L-methionine biosynthesis via salvage pathway; L-methionine from S-methyl-5-thio-alpha-D-ribose 1-phosphate: step 4/6. In terms of biological role, bifunctional enzyme that catalyzes the enolization of 2,3-diketo-5-methylthiopentyl-1-phosphate (DK-MTP-1-P) into the intermediate 2-hydroxy-3-keto-5-methylthiopentenyl-1-phosphate (HK-MTPenyl-1-P), which is then dephosphorylated to form the acireductone 1,2-dihydroxy-3-keto-5-methylthiopentene (DHK-MTPene). This chain is Enolase-phosphatase E1, found in Pseudomonas aeruginosa (strain UCBPP-PA14).